Consider the following 41-residue polypeptide: Iota-conotoxin-like r11d (41 aa).

Intrachain disulfides connect Cys2/Cys16, Cys9/Cys19, Cys15/Cys24, and Cys18/Cys35. At Pro8 the chain carries 4-hydroxyproline. The residue at position 26 (Pro26) is a 4-hydroxyproline.

In terms of processing, position 41 corresponds to a L-threonine, and not a D-threonine as firstly supposed. As to expression, expressed by the venom duct.

It is found in the secreted. Its function is as follows. Iota-conotoxins bind to voltage-gated sodium channels (Nav) and act as agonists by shifting the voltage-dependence of activation to more hyperpolarized levels. Both natural (L-Thr form) and synthetic (D-Thr form) peptides cause paralysis and death following intracranial injection and grooming and hypersensitivity upon intraperitoneal injection into mice. The L-Thr form of the peptide is 7-fold more potent than the D-Thr form. Both natural peptide (L-Thr form) and synthetic peptide (D-Thr form) are active on nerve, and on muscle. This is Iota-conotoxin-like r11d from Conus radiatus (Rayed cone).